A 272-amino-acid chain; its full sequence is 5'-nucleotidase SurE (272 aa).

Residues Asp-8, Asp-9, Ser-39, and Asn-96 each contribute to the a divalent metal cation site.

Belongs to the SurE nucleotidase family. Requires a divalent metal cation as cofactor.

The protein localises to the cytoplasm. It carries out the reaction a ribonucleoside 5'-phosphate + H2O = a ribonucleoside + phosphate. Functionally, nucleotidase that shows phosphatase activity on nucleoside 5'-monophosphates. The protein is 5'-nucleotidase SurE of Heliobacterium modesticaldum (strain ATCC 51547 / Ice1).